The primary structure comprises 624 residues: Actin-related protein 8 (624 aa).

Methionine 1 is subject to N-acetylmethionine. Residues 1–25 (MTQAEKGDTENGKEKGGEKEKEQRG) show a composition bias toward basic and acidic residues. A disordered region spans residues 1 to 29 (MTQAEKGDTENGKEKGGEKEKEQRGVKRP). 2 residues coordinate ATP: serine 55 and threonine 56. Phosphoserine is present on serine 132. ATP is bound at residue 283–286 (DVGD). Serine 412 is modified (phosphoserine). Residues 430 to 462 (SKQEQSAKATADRKSASKPIGFEGDLRGQSSDL) form a disordered region.

Belongs to the actin family. ARP8 subfamily. In terms of assembly, component of the chromatin remodeling INO80 complex; specifically part of a complex module associated with the DBINO domain of INO80. Interacts with ACTR5; the interaction is observed in asynchronous (interphase) cells but not in metaphase-arrested cells indicative for a possible dissociation of the INO80 complex in mitotic cells. Exists as monomers and dimers, but the dimer is most probably the biologically relevant form required for stable interactions with histones that exploits the twofold symmetry of the nucleosome core.

Its subcellular location is the nucleus. It localises to the chromosome. Functionally, plays an important role in the functional organization of mitotic chromosomes. Exhibits low basal ATPase activity, and unable to polymerize. Proposed core component of the chromatin remodeling INO80 complex which is involved in transcriptional regulation, DNA replication and probably DNA repair. Required for the recruitment of INO80 (and probably the INO80 complex) to sites of DNA damage. Strongly prefer nucleosomes and H3-H4 tetramers over H2A-H2B dimers, suggesting it may act as a nucleosome recognition module within the complex. This chain is Actin-related protein 8 (ACTR8), found in Homo sapiens (Human).